The chain runs to 296 residues: MGAAAPAESADLGNFWKAGEPLLQGPDALAAPMSRSPSTPQTTPSPQGRQSPWPLRSLTQSHIQYFQWGRPVPSTHLIEVRPTQDPAKPQRVVSEGWRRPALPGETALGRDLSCAWEGCMKGGLCRAWNPGRTWSPVTIGIAPPERQESPWRSPGQRARPAGRPAAQELLDPCTRETLLGALSQCPKGSARFDGPLWFEVSDSKGGRRNLQPRPSAFKPLSKNGAVASFVPRPGPLKPSLGPWSLSFCDDAWPSVLVQPAPSAIWDFWEATTPSCGSCSRVSFALEVTQSAGPFGS.

2 disordered regions span residues 1 to 54 (MGAA…SPWP) and 142 to 162 (APPE…RPAG). Over residues 34–52 (SRSPSTPQTTPSPQGRQSP) the composition is skewed to low complexity.

The protein belongs to the POM121 family.

This Homo sapiens (Human) protein is POM121-like protein 12 (POM121L12).